Reading from the N-terminus, the 290-residue chain is Pyridoxal kinase PdxY (290 aa).

Substrate-binding positions include serine 12 and 47 to 48 (TQ). ATP-binding positions include aspartate 114, glutamate 151, lysine 184, and 211 to 214 (RPLL). Aspartate 225 serves as a coordination point for substrate.

Belongs to the pyridoxine kinase family. PdxY subfamily. Homodimer. Mg(2+) serves as cofactor.

It carries out the reaction pyridoxal + ATP = pyridoxal 5'-phosphate + ADP + H(+). Its pathway is cofactor metabolism; pyridoxal 5'-phosphate salvage; pyridoxal 5'-phosphate from pyridoxal: step 1/1. In terms of biological role, pyridoxal kinase involved in the salvage pathway of pyridoxal 5'-phosphate (PLP). Catalyzes the phosphorylation of pyridoxal to PLP. This chain is Pyridoxal kinase PdxY, found in Pseudomonas putida (strain GB-1).